Consider the following 383-residue polypeptide: tRNA-specific 2-thiouridylase MnmA (383 aa).

Residues 11 to 18 and Met-37 contribute to the ATP site; that span reads GLSGGVDS. The interaction with target base in tRNA stretch occupies residues 97–99; sequence NPD. The active-site Nucleophile is the Cys-102. Cys-102 and Cys-200 are oxidised to a cystine. ATP is bound at residue Gly-127. The tract at residues 150 to 152 is interaction with tRNA; the sequence is KDQ. Catalysis depends on Cys-200, which acts as the Cysteine persulfide intermediate. The interval 312–313 is interaction with tRNA; the sequence is RY. Residues 361-383 are disordered; that stretch reads IDTAHPADRSAPPALQTQSTEVV.

This sequence belongs to the MnmA/TRMU family.

Its subcellular location is the cytoplasm. The enzyme catalyses S-sulfanyl-L-cysteinyl-[protein] + uridine(34) in tRNA + AH2 + ATP = 2-thiouridine(34) in tRNA + L-cysteinyl-[protein] + A + AMP + diphosphate + H(+). In terms of biological role, catalyzes the 2-thiolation of uridine at the wobble position (U34) of tRNA, leading to the formation of s(2)U34. The protein is tRNA-specific 2-thiouridylase MnmA of Halorhodospira halophila (strain DSM 244 / SL1) (Ectothiorhodospira halophila (strain DSM 244 / SL1)).